A 312-amino-acid chain; its full sequence is Malate dehydrogenase (312 aa).

NAD(+)-binding positions include 12–17 (GAGFTG) and Asp-36. Residues Arg-87 and Arg-93 each contribute to the substrate site. NAD(+)-binding positions include Asn-100 and 123 to 125 (LTN). Asn-125 serves as a coordination point for substrate. Residue Ser-149 is modified to Phosphoserine. Arg-156 is a binding site for substrate. The active-site Proton acceptor is His-180.

It belongs to the LDH/MDH superfamily. MDH type 3 family.

It carries out the reaction (S)-malate + NAD(+) = oxaloacetate + NADH + H(+). Functionally, catalyzes the reversible oxidation of malate to oxaloacetate. In Bacillus anthracis (strain A0248), this protein is Malate dehydrogenase.